Consider the following 302-residue polypeptide: Oxygen-dependent coproporphyrinogen-III oxidase (302 aa).

Serine 94 is a substrate binding site. A divalent metal cation is bound by residues histidine 98 and histidine 108. The Proton donor role is filled by histidine 108. Substrate is bound at residue 110–112 (NVR). A divalent metal cation contacts are provided by histidine 147 and histidine 177. An important for dimerization region spans residues 242–277 (YVEFNLVYDRGTLFGLQTGGRTESILMSMPPLVRWQ). 260–262 (GGR) lines the substrate pocket.

The protein belongs to the aerobic coproporphyrinogen-III oxidase family. As to quaternary structure, homodimer. A divalent metal cation serves as cofactor.

The protein localises to the cytoplasm. The catalysed reaction is coproporphyrinogen III + O2 + 2 H(+) = protoporphyrinogen IX + 2 CO2 + 2 H2O. It participates in porphyrin-containing compound metabolism; protoporphyrin-IX biosynthesis; protoporphyrinogen-IX from coproporphyrinogen-III (O2 route): step 1/1. Involved in the heme biosynthesis. Catalyzes the aerobic oxidative decarboxylation of propionate groups of rings A and B of coproporphyrinogen-III to yield the vinyl groups in protoporphyrinogen-IX. This is Oxygen-dependent coproporphyrinogen-III oxidase from Shewanella putrefaciens (strain CN-32 / ATCC BAA-453).